A 105-amino-acid polypeptide reads, in one-letter code: Large ribosomal subunit protein uL24 (105 aa).

The protein belongs to the universal ribosomal protein uL24 family. Part of the 50S ribosomal subunit.

Functionally, one of two assembly initiator proteins, it binds directly to the 5'-end of the 23S rRNA, where it nucleates assembly of the 50S subunit. Its function is as follows. One of the proteins that surrounds the polypeptide exit tunnel on the outside of the subunit. In Halorhodospira halophila (strain DSM 244 / SL1) (Ectothiorhodospira halophila (strain DSM 244 / SL1)), this protein is Large ribosomal subunit protein uL24.